A 112-amino-acid polypeptide reads, in one-letter code: Large ribosomal subunit protein eL22 (112 aa).

It belongs to the eukaryotic ribosomal protein eL22 family. Component of the large ribosomal subunit.

The protein resides in the cytoplasm. This Encephalitozoon cuniculi (strain GB-M1) (Microsporidian parasite) protein is Large ribosomal subunit protein eL22 (RPL22).